The chain runs to 139 residues: MATIAQLIRKPRKKKKVKSKSPALHYNLNLLNKKVTNVYSPLKRGVCTRVGTMTPKKPNSALRKYAKVRLTNGFEVLTYIPGEGHNLQEHSVTLLRGGRVKDLPGVRYHIVRGTLDTVGVEKRRQQRSAYGAKKPKAKS.

It belongs to the universal ribosomal protein uS12 family. As to quaternary structure, part of the 30S ribosomal subunit. Contacts proteins S8 and S17. May interact with IF1 in the 30S initiation complex.

Its function is as follows. With S4 and S5 plays an important role in translational accuracy. In terms of biological role, interacts with and stabilizes bases of the 16S rRNA that are involved in tRNA selection in the A site and with the mRNA backbone. Located at the interface of the 30S and 50S subunits, it traverses the body of the 30S subunit contacting proteins on the other side and probably holding the rRNA structure together. The combined cluster of proteins S8, S12 and S17 appears to hold together the shoulder and platform of the 30S subunit. This chain is Small ribosomal subunit protein uS12, found in Mycoplasma pneumoniae (strain ATCC 29342 / M129 / Subtype 1) (Mycoplasmoides pneumoniae).